The following is a 133-amino-acid chain: MTTLRVLLAVCCAAYCILAEDVTVPANGELKLMPDQKAGGRLEGQWKISTPDHYYLIVSCGLWSSASGTCKDKILITQGGKTTEVCGEGKNSFYVQQDTNLNTAEIIILTNTPDARAMCTVYSAEKPKEENTF.

The signal sequence occupies residues 1–22 (MTTLRVLLAVCCAAYCILAEDV). The 103-residue stretch at 23–125 (TVPANGELKL…RAMCTVYSAE (103 aa)) folds into the CUB domain. A disulfide bridge links C70 with C86.

The protein belongs to the venom CUB family. Expressed by the venom gland.

The protein localises to the secreted. Its function is as follows. May function as an antimicrobial peptide and may be related to the innate defense of the insect in the salivary glands. The sequence is that of Triatox from Triatoma infestans (Assassin bug).